The following is a 526-amino-acid chain: Amino acid transporter AVT1E (526 aa).

The tract at residues methionine 1–proline 49 is disordered. Over residues aspartate 8–phenylalanine 18 the composition is skewed to basic and acidic residues. The next 11 helical transmembrane spans lie at serine 140–valine 160, tryptophan 165–leucine 185, isoleucine 212–methionine 232, leucine 253–leucine 273, leucine 278–phenylalanine 298, isoleucine 320–isoleucine 340, valine 353–phenylalanine 373, isoleucine 397–valine 417, glycine 436–valine 456, phenylalanine 458–phenylalanine 478, and phenylalanine 494–threonine 514.

The protein belongs to the amino acid/polyamine transporter 2 family. Amino acid/auxin permease (AAAP) (TC 2.A.18.5) subfamily.

The protein resides in the membrane. The sequence is that of Amino acid transporter AVT1E from Arabidopsis thaliana (Mouse-ear cress).